The following is a 94-amino-acid chain: Phosphoribosyl-ATP pyrophosphatase (94 aa).

The protein belongs to the PRA-PH family.

It is found in the cytoplasm. It catalyses the reaction 1-(5-phospho-beta-D-ribosyl)-ATP + H2O = 1-(5-phospho-beta-D-ribosyl)-5'-AMP + diphosphate + H(+). Its pathway is amino-acid biosynthesis; L-histidine biosynthesis; L-histidine from 5-phospho-alpha-D-ribose 1-diphosphate: step 2/9. The polypeptide is Phosphoribosyl-ATP pyrophosphatase (Pyrobaculum calidifontis (strain DSM 21063 / JCM 11548 / VA1)).